A 664-amino-acid chain; its full sequence is Transketolase 1 (664 aa).

A substrate-binding site is contributed by histidine 26. Thiamine diphosphate-binding positions include histidine 66 and 114–116 (GPL). Aspartate 155 provides a ligand contact to Mg(2+). Glycine 156 and asparagine 185 together coordinate thiamine diphosphate. Mg(2+) is bound by residues asparagine 185 and isoleucine 187. Residues histidine 260, arginine 357, and serine 384 each coordinate substrate. A thiamine diphosphate-binding site is contributed by histidine 260. Catalysis depends on glutamate 411, which acts as the Proton donor. Phenylalanine 437 provides a ligand contact to thiamine diphosphate. Residues histidine 461, aspartate 469, and arginine 520 each contribute to the substrate site.

The protein belongs to the transketolase family. Homodimer. Mg(2+) serves as cofactor. Ca(2+) is required as a cofactor. It depends on Mn(2+) as a cofactor. Requires Co(2+) as cofactor. The cofactor is thiamine diphosphate.

It catalyses the reaction D-sedoheptulose 7-phosphate + D-glyceraldehyde 3-phosphate = aldehydo-D-ribose 5-phosphate + D-xylulose 5-phosphate. Catalyzes the transfer of a two-carbon ketol group from a ketose donor to an aldose acceptor, via a covalent intermediate with the cofactor thiamine pyrophosphate. The protein is Transketolase 1 (tkt1) of Vibrio vulnificus (strain CMCP6).